A 102-amino-acid chain; its full sequence is uncharacterized protein (102 aa).

Helical transmembrane passes span 1–21 (MVPL…LRPV), 42–62 (SIID…LILV), and 68–88 (SIHA…FSIV).

It is found in the membrane. This is an uncharacterized protein from Saccharomyces cerevisiae (strain ATCC 204508 / S288c) (Baker's yeast).